The chain runs to 46 residues: Toxin PhcrTx2 (46 aa).

Disulfide bonds link Cys4-Cys40, Cys6-Cys32, and Cys22-Cys41.

The protein belongs to the sea anemone type 3 (BDS) potassium channel toxin family.

Its subcellular location is the secreted. It localises to the nematocyst. Neurotoxin that induces paralysis (but not death) to U.thayeri crabs. Partially and reversibly inhibits glutamate-evoked peak currents (IC(50)=4.7 uM) but not voltage-gated potassium channel currents in cultured isolated neurons from the land snail H.aspersa. Weakly inhibits voltage-gated potassium peak currents (IC(50)=6.4 uM) and steady-state currents (IC(50)=8.2 uM) in rat dorsal root ganglion (DRG) neurons. Weakly inhibits voltage-gated sodium currents in rat DRG neurons (IC(50)=0.9 uM). The polypeptide is Toxin PhcrTx2 (Phymanthus crucifer (Red beaded anemone)).